The chain runs to 367 residues: Aurora kinase (367 aa).

2 stretches are compositionally biased toward polar residues: residues 1–29 (MQRNSLVNIKLNANSPSKKTTTRPNTSRI) and 37–48 (HSPQQRNPNSKI). The tract at residues 1–52 (MQRNSLVNIKLNANSPSKKTTTRPNTSRINKPWRISHSPQQRNPNSKIPSPV) is disordered. Serine 5 bears the Phosphoserine; by autocatalysis mark. Serine 76 is subject to Phosphoserine. The region spanning 104 to 355 (FELGKKLGKG…LGDVKMHPWI (252 aa)) is the Protein kinase domain. Residues 110 to 118 (LGKGKFGKV) and lysine 133 each bind ATP. The active-site Proton acceptor is the aspartate 227. Threonine 260 bears the Phosphothreonine; by autocatalysis mark.

This sequence belongs to the protein kinase superfamily. Ser/Thr protein kinase family. Aurora subfamily. As to quaternary structure, component of the CPC complex at least composed of IPL1, BIR1 and SLI15.

The protein localises to the nucleus. The protein resides in the cytoplasm. It localises to the cytoskeleton. Its subcellular location is the spindle. It is found in the chromosome. The protein localises to the centromere. The protein resides in the kinetochore. The enzyme catalyses L-seryl-[protein] + ATP = O-phospho-L-seryl-[protein] + ADP + H(+). The catalysed reaction is L-threonyl-[protein] + ATP = O-phospho-L-threonyl-[protein] + ADP + H(+). In terms of biological role, component of the chromosomal passenger complex (CPC), a complex that acts as a key regulator of chromosome segregation and cytokinesis. Has a role in error-correction of aberrent kinetochore-microtubule attachments to ensure that sister kinetochores become bioriented and connect to opposite poles by promoting spindle assembly checkpoint signaling. Acts in opposition to the phosphatase PP1. Not required for kinetochore detachment from microtubules during replication of centromeric DNA. Phosphorylates histone H3 to form H3S10ph during mitosis and meiosis. Phosphorylates CNN1, which contributes to the enrichment of CNN1 on anaphase kinetochores. Phosphorylates RGD1. The chain is Aurora kinase (IPL1) from Saccharomyces cerevisiae (strain ATCC 204508 / S288c) (Baker's yeast).